The sequence spans 64 residues: Large ribosomal subunit protein bL35 (64 aa).

This sequence belongs to the bacterial ribosomal protein bL35 family.

This Ureaplasma parvum serovar 3 (strain ATCC 27815 / 27 / NCTC 11736) protein is Large ribosomal subunit protein bL35.